Here is a 273-residue protein sequence, read N- to C-terminus: S-adenosylmethionine decarboxylase proenzyme (273 aa).

The active-site Schiff-base intermediate with substrate; via pyruvic acid is the serine 118. Serine 118 is subject to Pyruvic acid (Ser); by autocatalysis. The active-site Proton acceptor; for processing activity is the histidine 123. Cysteine 146 functions as the Proton donor; for catalytic activity in the catalytic mechanism.

It belongs to the prokaryotic AdoMetDC family. Type 2 subfamily. In terms of assembly, heterooctamer of four alpha and four beta chains arranged as a tetramer of alpha/beta heterodimers. It depends on pyruvate as a cofactor. Post-translationally, is synthesized initially as an inactive proenzyme. Formation of the active enzyme involves a self-maturation process in which the active site pyruvoyl group is generated from an internal serine residue via an autocatalytic post-translational modification. Two non-identical subunits are generated from the proenzyme in this reaction, and the pyruvate is formed at the N-terminus of the alpha chain, which is derived from the carboxyl end of the proenzyme. The post-translation cleavage follows an unusual pathway, termed non-hydrolytic serinolysis, in which the side chain hydroxyl group of the serine supplies its oxygen atom to form the C-terminus of the beta chain, while the remainder of the serine residue undergoes an oxidative deamination to produce ammonia and the pyruvoyl group blocking the N-terminus of the alpha chain.

The enzyme catalyses S-adenosyl-L-methionine + H(+) = S-adenosyl 3-(methylsulfanyl)propylamine + CO2. The protein operates within amine and polyamine biosynthesis; S-adenosylmethioninamine biosynthesis; S-adenosylmethioninamine from S-adenosyl-L-methionine: step 1/1. Its function is as follows. Catalyzes the decarboxylation of S-adenosylmethionine to S-adenosylmethioninamine (dcAdoMet), the propylamine donor required for the synthesis of the polyamines spermine and spermidine from the diamine putrescine. The sequence is that of S-adenosylmethionine decarboxylase proenzyme from Alkalilimnicola ehrlichii (strain ATCC BAA-1101 / DSM 17681 / MLHE-1).